We begin with the raw amino-acid sequence, 798 residues long: Phenylalanine--tRNA ligase beta subunit (798 aa).

The tRNA-binding domain occupies 39–147 (AARLAGFTLA…PSGEVGERFI (109 aa)). The B5 domain maps to 404-475 (DHSRAYKLDA…RIASLTKLVG (72 aa)). Residues aspartate 453, aspartate 459, glutamate 462, and glutamate 463 each coordinate Mg(2+). The region spanning 704–797 (RDLQAVERDF…VAKATGGTLR (94 aa)) is the FDX-ACB domain.

This sequence belongs to the phenylalanyl-tRNA synthetase beta subunit family. Type 1 subfamily. Tetramer of two alpha and two beta subunits. It depends on Mg(2+) as a cofactor.

The protein resides in the cytoplasm. It catalyses the reaction tRNA(Phe) + L-phenylalanine + ATP = L-phenylalanyl-tRNA(Phe) + AMP + diphosphate + H(+). The polypeptide is Phenylalanine--tRNA ligase beta subunit (Ruegeria pomeroyi (strain ATCC 700808 / DSM 15171 / DSS-3) (Silicibacter pomeroyi)).